The chain runs to 793 residues: E3 ubiquitin-protein ligase UHRF1 (793 aa).

The 78-residue stretch at 1–78 folds into the Ubiquitin-like domain; it reads MWIQVRTMDG…IQLLVRQSLV (78 aa). A phosphoserine mark is found at S76, S91, S95, and S165. The disordered stretch occupies residues 82 to 124; sequence STKERDSELSDTDSGCCLGQSESDKSSTHGEAAAETDSRPADE. Tudor-like stretches follow at residues 133–209 and 216–283; these read GLYK…ARAR and DLEV…IERP. Residue K279 forms a Glycyl lysine isopeptide (Lys-Gly) (interchain with G-Cter in SUMO2) linkage. The residue at position 287 (S287) is a Phosphoserine. Residues 296 to 301 are linker; the sequence is RKSGPS. S298 is modified (phosphoserine; by PKA). The PHD-type zinc finger occupies 310-366; it reads NRLCRVCACHLCGGRQDPDKQLMCDECDMAFHIYCLDPPLSSVPSEDEWYCPECRND. Histone H3R2me0 binding stretches follow at residues 333-337 and 353-355; these read CDECD and PSE. A Phosphoserine modification is found at S368. K385 participates in a covalent cross-link: Glycyl lysine isopeptide (Lys-Gly) (interchain with G-Cter in SUMO2). K399 bears the N6-acetyllysine mark. Residues 419–582 form the YDG domain; it reads GPIPGIPVGT…FLVWRYLLRR (164 aa). Residues 445–446 form a required to promote base flipping region; the sequence is HV. Residues 463–464 and D469 each bind DNA; that span reads AG. Required for formation of a 5-methylcytosine-binding pocket stretches follow at residues 466–469 and 478–481; these read YEDD and YTGS. Position 546 is an N6-acetyllysine; alternate (K546). A Glycyl lysine isopeptide (Lys-Gly) (interchain with G-Cter in SUMO2); alternate cross-link involves residue K546. Residues 618–629 are compositionally biased toward basic and acidic residues; the sequence is REREKENSKREE. Positions 618 to 673 are disordered; it reads REREKENSKREEEEQQEGGFASPRTGKGKWKRKSAGGGPSRAGSPRRTSKKTKVEP. S639 carries the post-translational modification Phosphoserine; by CDK1. Position 651 is a phosphoserine (S651). Residue K670 forms a Glycyl lysine isopeptide (Lys-Gly) (interchain with G-Cter in SUMO2) linkage. Phosphoserine occurs at positions 707 and 709. An RING-type zinc finger spans residues 724–763; sequence CICCQELVFRPITTVCQHNVCKDCLDRSFRAQVFSCPACR.

In terms of assembly, interacts with DNMT3A and DNMT3B. Interacts with DNMT1; the interaction is direct. Interacts with USP7; leading to its deubiquitination. Interacts with histone H3. Interacts with HDAC1, but not with HDAC2. Interacts with BLTP3A. Interacts with PML. Interacts with EHMT2. Binds hemimethylated CpG containing oligonucleotides. Interacts with ZNF263; recruited to the SIX3 promoter along with other proteins involved in chromatin modification and transcriptional corepression where it contributes to transcriptional repression. Interacts with UHRF2. Interacts with FANCD2. Interacts with TET1 isoform 2; this interaction induces the recruitment of TET1 isoform 2 to replicating heterochromatin. Post-translationally, phosphorylation at Ser-298 of the linker region decreases the binding to H3K9me3. Phosphorylation at Ser-639 by CDK1 during M phase impairs interaction with USP7, preventing deubiquitination and leading to degradation by the proteasome. In terms of processing, ubiquitinated; which leads to proteasomal degradation. Autoubiquitinated; interaction with USP7 leads to deubiquitination and prevents degradation. Ubiquitination and degradation takes place during M phase, when phosphorylation at Ser-639 prevents interaction with USP7 and subsequent deubiquitination. Polyubiquitination may be stimulated by DNA damage. As to expression, expressed in thymus, bone marrow, testis, lung and heart. Overexpressed in breast cancer.

It localises to the nucleus. It carries out the reaction S-ubiquitinyl-[E2 ubiquitin-conjugating enzyme]-L-cysteine + [acceptor protein]-L-lysine = [E2 ubiquitin-conjugating enzyme]-L-cysteine + N(6)-ubiquitinyl-[acceptor protein]-L-lysine.. It functions in the pathway protein modification; protein ubiquitination. Multidomain protein that acts as a key epigenetic regulator by bridging DNA methylation and chromatin modification. Specifically recognizes and binds hemimethylated DNA at replication forks via its YDG domain and recruits DNMT1 methyltransferase to ensure faithful propagation of the DNA methylation patterns through DNA replication. In addition to its role in maintenance of DNA methylation, also plays a key role in chromatin modification: through its tudor-like regions and PHD-type zinc fingers, specifically recognizes and binds histone H3 trimethylated at 'Lys-9' (H3K9me3) and unmethylated at 'Arg-2' (H3R2me0), respectively, and recruits chromatin proteins. Enriched in pericentric heterochromatin where it recruits different chromatin modifiers required for this chromatin replication. Also localizes to euchromatic regions where it negatively regulates transcription possibly by impacting DNA methylation and histone modifications. Has E3 ubiquitin-protein ligase activity by mediating the ubiquitination of target proteins such as histone H3 and PML. It is still unclear how E3 ubiquitin-protein ligase activity is related to its role in chromatin in vivo. Plays a role in DNA repair by cooperating with UHRF2 to ensure recruitment of FANCD2 to interstrand cross-links (ICLs) leading to FANCD2 activation. Acts as a critical player of proper spindle architecture by catalyzing the 'Lys-63'-linked ubiquitination of KIF11, thereby controlling KIF11 localization on the spindle. This is E3 ubiquitin-protein ligase UHRF1 (UHRF1) from Homo sapiens (Human).